The following is a 943-amino-acid chain: uncharacterized protein (943 aa).

Met-1 carries the post-translational modification N-acetylmethionine. Disordered regions lie at residues 37–63 (DETP…QQQQ), 152–177 (KHQF…DDEV), 315–381 (LPMN…QQLQ), 397–472 (QNVP…PLKK), and 515–546 (EREA…ESDD). The span at 41–58 (ISRNGNDSNINIQPSSVP) shows a compositional bias: polar residues. The segment covering 152–162 (KHQFGKSKKNT) has biased composition (basic residues). Over residues 318 to 358 (NNYNNHPGQFQNTPPVMPSGQQPPQQPRTLSLTNGPRYSPQ) the composition is skewed to polar residues. Residues 367–381 (QQISQRQQQQQQQLQ) show a composition bias toward low complexity. The segment covering 397–409 (QNVPQGFNPWSPN) has biased composition (polar residues). Low complexity predominate over residues 417 to 433 (SMKQPISQSSISSKNNS). Positions 434–470 (AYSIPNVQNNSLTTFSPSSPTDATAMPNSTKQGSSPL) are enriched in polar residues. The segment covering 515 to 533 (EREALVEEKEKERAEKNTE) has biased composition (basic and acidic residues). Ser-553, Ser-586, and Ser-619 each carry phosphoserine. The tract at residues 616–639 (EFPSPGKYNSNSDNGEMNTTNEVD) is disordered. Polar residues predominate over residues 622-639 (KYNSNSDNGEMNTTNEVD). Ser-649 carries the post-translational modification Phosphoserine. Residues 654-683 (IPERDPKRNVSDATIKRRESDGNGRRLSNV) are disordered. The span at 655-677 (PERDPKRNVSDATIKRRESDGNG) shows a compositional bias: basic and acidic residues. Phosphoserine occurs at positions 681, 766, and 771.

This is an uncharacterized protein from Saccharomyces cerevisiae (strain ATCC 204508 / S288c) (Baker's yeast).